A 162-amino-acid chain; its full sequence is NAD(P)H-quinone oxidoreductase subunit N (162 aa).

The protein belongs to the complex I NdhN subunit family. In terms of assembly, NDH-1 can be composed of about 15 different subunits; different subcomplexes with different compositions have been identified which probably have different functions.

It is found in the cellular thylakoid membrane. It carries out the reaction a plastoquinone + NADH + (n+1) H(+)(in) = a plastoquinol + NAD(+) + n H(+)(out). It catalyses the reaction a plastoquinone + NADPH + (n+1) H(+)(in) = a plastoquinol + NADP(+) + n H(+)(out). Its function is as follows. NDH-1 shuttles electrons from an unknown electron donor, via FMN and iron-sulfur (Fe-S) centers, to quinones in the respiratory and/or the photosynthetic chain. The immediate electron acceptor for the enzyme in this species is believed to be plastoquinone. Couples the redox reaction to proton translocation, and thus conserves the redox energy in a proton gradient. Cyanobacterial NDH-1 also plays a role in inorganic carbon-concentration. The sequence is that of NAD(P)H-quinone oxidoreductase subunit N from Nostoc sp. (strain PCC 7120 / SAG 25.82 / UTEX 2576).